We begin with the raw amino-acid sequence, 630 residues long: GTPase-activating protein NEL1 (630 aa).

It belongs to the SEC23/SEC24 family. SEC23 subfamily.

It localises to the cytoplasm. It is found in the nucleus. Acts as a GTPase-activating protein (GAP) for SAR1. Contrary to its SEC23 homolog, NEL1 does not associate with SEC24 and its homologs, nor does it associate with the COPII components, suggesting that it is unlikely that NEL1 functions as a structural component of the vesicle coat machinery. May function as a signaling molecule. This Saccharomyces cerevisiae (strain ATCC 204508 / S288c) (Baker's yeast) protein is GTPase-activating protein NEL1.